We begin with the raw amino-acid sequence, 189 residues long: Ion-translocating oxidoreductase complex subunit B (189 aa).

The segment at 1–26 (MSAVMIAVVLLGLLALVFGAILGFAA) is hydrophobic. In terms of domain architecture, 4Fe-4S spans 32-90 (EGDPLVDQVESLLPQTQCGQCGYPGCRPYAEAIAGGDQINKCPPGGTATMEKIAELMGV). 12 residues coordinate [4Fe-4S] cluster: Cys-49, Cys-52, Cys-57, Cys-73, Cys-114, Cys-117, Cys-120, Cys-124, Cys-144, Cys-147, Cys-150, and Cys-154. 4Fe-4S ferredoxin-type domains follow at residues 105 to 134 (KVAY…GAGK) and 136 to 164 (MHTV…MLPV).

The protein belongs to the 4Fe4S bacterial-type ferredoxin family. RnfB subfamily. In terms of assembly, the complex is composed of six subunits: RnfA, RnfB, RnfC, RnfD, RnfE and RnfG. [4Fe-4S] cluster serves as cofactor.

It is found in the cell inner membrane. In terms of biological role, part of a membrane-bound complex that couples electron transfer with translocation of ions across the membrane. This chain is Ion-translocating oxidoreductase complex subunit B, found in Shewanella amazonensis (strain ATCC BAA-1098 / SB2B).